Here is a 345-residue protein sequence, read N- to C-terminus: UDP-N-acetylenolpyruvoylglucosamine reductase (345 aa).

Residues 16 to 186 (LPAYASNVIS…VSVGIKLMKS (171 aa)) enclose the FAD-binding PCMH-type domain. The active site involves Arg-162. The active-site Proton donor is the Ser-232. The active site involves Glu-328.

This sequence belongs to the MurB family. It depends on FAD as a cofactor.

The protein resides in the cytoplasm. The catalysed reaction is UDP-N-acetyl-alpha-D-muramate + NADP(+) = UDP-N-acetyl-3-O-(1-carboxyvinyl)-alpha-D-glucosamine + NADPH + H(+). It functions in the pathway cell wall biogenesis; peptidoglycan biosynthesis. Functionally, cell wall formation. The sequence is that of UDP-N-acetylenolpyruvoylglucosamine reductase from Yersinia pestis.